The primary structure comprises 392 residues: Formate-dependent phosphoribosylglycinamide formyltransferase (392 aa).

N(1)-(5-phospho-beta-D-ribosyl)glycinamide is bound by residues 22–23 and E82; that span reads EL. ATP contacts are provided by residues R114, K155, 160–165, 195–198, and E203; these read SSGKGQ and EGVV. The ATP-grasp domain occupies 119–308; sequence RLAAEELGLP…EFALHVRAFL (190 aa). Mg(2+) contacts are provided by E267 and E279. N(1)-(5-phospho-beta-D-ribosyl)glycinamide contacts are provided by residues D286, K355, and 362 to 363; that span reads RR.

The protein belongs to the PurK/PurT family. As to quaternary structure, homodimer.

It catalyses the reaction N(1)-(5-phospho-beta-D-ribosyl)glycinamide + formate + ATP = N(2)-formyl-N(1)-(5-phospho-beta-D-ribosyl)glycinamide + ADP + phosphate + H(+). Its pathway is purine metabolism; IMP biosynthesis via de novo pathway; N(2)-formyl-N(1)-(5-phospho-D-ribosyl)glycinamide from N(1)-(5-phospho-D-ribosyl)glycinamide (formate route): step 1/1. Functionally, involved in the de novo purine biosynthesis. Catalyzes the transfer of formate to 5-phospho-ribosyl-glycinamide (GAR), producing 5-phospho-ribosyl-N-formylglycinamide (FGAR). Formate is provided by PurU via hydrolysis of 10-formyl-tetrahydrofolate. In Salmonella typhimurium (strain LT2 / SGSC1412 / ATCC 700720), this protein is Formate-dependent phosphoribosylglycinamide formyltransferase.